We begin with the raw amino-acid sequence, 74 residues long: Protein kish-B (74 aa).

The first 22 residues, 1–22, serve as a signal peptide directing secretion; it reads MTNVYSLDGILVFGLLFVCTCA. Residues 23–52 lie on the Extracellular side of the membrane; that stretch reads YFKKVPRLKTWLLSEKKGVWGVFYKAAVIG. Residues 53 to 73 traverse the membrane as a helical segment; it reads TRLHAAVAIACVVMAFYVLFI. K74 is a topological domain (cytoplasmic).

It belongs to the KISH family.

It localises to the golgi apparatus membrane. In terms of biological role, involved in the early part of the secretory pathway. This chain is Protein kish-B (TMEM167B), found in Homo sapiens (Human).